Here is a 327-residue protein sequence, read N- to C-terminus: tRNA U34 carboxymethyltransferase (327 aa).

Carboxy-S-adenosyl-L-methionine is bound by residues Lys-91, Trp-105, Lys-110, Gly-130, 181 to 182, Met-196, Tyr-200, and Arg-315; that span reads IE.

Belongs to the class I-like SAM-binding methyltransferase superfamily. CmoB family. In terms of assembly, homotetramer.

The enzyme catalyses carboxy-S-adenosyl-L-methionine + 5-hydroxyuridine(34) in tRNA = 5-carboxymethoxyuridine(34) in tRNA + S-adenosyl-L-homocysteine + H(+). Catalyzes carboxymethyl transfer from carboxy-S-adenosyl-L-methionine (Cx-SAM) to 5-hydroxyuridine (ho5U) to form 5-carboxymethoxyuridine (cmo5U) at position 34 in tRNAs. In Pectobacterium atrosepticum (strain SCRI 1043 / ATCC BAA-672) (Erwinia carotovora subsp. atroseptica), this protein is tRNA U34 carboxymethyltransferase.